We begin with the raw amino-acid sequence, 429 residues long: tRNA-2-methylthio-N(6)-dimethylallyladenosine synthase (429 aa).

In terms of domain architecture, MTTase N-terminal spans 2–115 (KLLYLQTLGC…ISEAVKTPKF (114 aa)). Cys11, Cys46, Cys78, Cys147, Cys151, and Cys154 together coordinate [4Fe-4S] cluster. The Radical SAM core domain occupies 133–365 (RGSPYKAFVN…QSRHNEILDE (233 aa)). The TRAM domain occupies 368–429 (KNQVGKIFDV…RMVLYGKITA (62 aa)).

The protein belongs to the methylthiotransferase family. MiaB subfamily. Monomer. [4Fe-4S] cluster serves as cofactor.

The protein resides in the cytoplasm. It catalyses the reaction N(6)-dimethylallyladenosine(37) in tRNA + (sulfur carrier)-SH + AH2 + 2 S-adenosyl-L-methionine = 2-methylsulfanyl-N(6)-dimethylallyladenosine(37) in tRNA + (sulfur carrier)-H + 5'-deoxyadenosine + L-methionine + A + S-adenosyl-L-homocysteine + 2 H(+). Functionally, catalyzes the methylthiolation of N6-(dimethylallyl)adenosine (i(6)A), leading to the formation of 2-methylthio-N6-(dimethylallyl)adenosine (ms(2)i(6)A) at position 37 in tRNAs that read codons beginning with uridine. This is tRNA-2-methylthio-N(6)-dimethylallyladenosine synthase from Campylobacter hominis (strain ATCC BAA-381 / DSM 21671 / CCUG 45161 / LMG 19568 / NCTC 13146 / CH001A).